The sequence spans 276 residues: Putative pyridoxine kinase (276 aa).

ATP is bound at residue Asn139. A Mg(2+)-binding site is contributed by Glu142. ATP-binding positions include 176–180 (KGGKA), Asp188, Gly213, and Lys238.

It belongs to the ThiD family.

It carries out the reaction pyridoxal + ATP = pyridoxal 5'-phosphate + ADP + H(+). Phosphorylates B6 vitamers; functions in a salvage pathway. Uses pyridoxal, pyridoxine, and pyridoxamine as substrates. The sequence is that of Putative pyridoxine kinase (pdxK) from Staphylococcus aureus (strain COL).